The sequence spans 477 residues: Glycogen synthase (477 aa).

Lys15 contributes to the ADP-alpha-D-glucose binding site.

Belongs to the glycosyltransferase 1 family. Bacterial/plant glycogen synthase subfamily.

It carries out the reaction [(1-&gt;4)-alpha-D-glucosyl](n) + ADP-alpha-D-glucose = [(1-&gt;4)-alpha-D-glucosyl](n+1) + ADP + H(+). It participates in glycan biosynthesis; glycogen biosynthesis. Functionally, synthesizes alpha-1,4-glucan chains using ADP-glucose. The polypeptide is Glycogen synthase (Glaesserella parasuis serovar 5 (strain SH0165) (Haemophilus parasuis)).